We begin with the raw amino-acid sequence, 451 residues long: Phosphoglucosamine mutase (451 aa).

The Phosphoserine intermediate role is filled by Ser101. Ser101, Asp242, Asp244, and Asp246 together coordinate Mg(2+). Ser101 carries the post-translational modification Phosphoserine.

It belongs to the phosphohexose mutase family. Mg(2+) is required as a cofactor. Activated by phosphorylation.

It catalyses the reaction alpha-D-glucosamine 1-phosphate = D-glucosamine 6-phosphate. Its function is as follows. Catalyzes the conversion of glucosamine-6-phosphate to glucosamine-1-phosphate. This Beijerinckia indica subsp. indica (strain ATCC 9039 / DSM 1715 / NCIMB 8712) protein is Phosphoglucosamine mutase.